A 395-amino-acid polypeptide reads, in one-letter code: MRRLFTSESVTEGHPDKVADQISDAILDAMLEQDPRSRVAVETLVTTGIAIVSGEVTTRAYVDIQDIVRKTIMEIGYTRAKYGFDGETCAVLSSIHSQSPDIAMGVDKALEAKEGELNAQDDLELVGAGDQGMMFGYATNETKELMPLPIMLAHKLALKLSEIRKSGTVPFLRPDGKTQVTVEYDENDRPVRVDTVLISTQHEPNVTIAEIKEALVKYVIDPIIPEELRDDNLNILVNPTGRFVLGGPSADTGLTGRKIIVDTYGGAIPHGGGAFSGKDPTKVDRSAHYFARYVAKNVVAAGLADKFMIQVAYAIGKAKPVSVMINTYGTAKIDEDKILKAVLELFDFRPGAIIKKLNLLRPIYKKTAAYGHFGRELEEFTWEKLDMVDELKRLL.

Residue His-14 coordinates ATP. Residue Asp-16 coordinates Mg(2+). Glu-42 serves as a coordination point for K(+). L-methionine contacts are provided by Glu-55 and Gln-98. The tract at residues Gln-98–Lys-108 is flexible loop. ATP-binding positions include Asp-175–Lys-177, Arg-242–Phe-243, Asp-251, Arg-257–Lys-258, Ala-274, and Lys-278. Position 251 (Asp-251) interacts with L-methionine. An L-methionine-binding site is contributed by Lys-282.

Belongs to the AdoMet synthase family. In terms of assembly, homotetramer; dimer of dimers. It depends on Mg(2+) as a cofactor. Requires K(+) as cofactor.

Its subcellular location is the cytoplasm. It carries out the reaction L-methionine + ATP + H2O = S-adenosyl-L-methionine + phosphate + diphosphate. It participates in amino-acid biosynthesis; S-adenosyl-L-methionine biosynthesis; S-adenosyl-L-methionine from L-methionine: step 1/1. Functionally, catalyzes the formation of S-adenosylmethionine (AdoMet) from methionine and ATP. The overall synthetic reaction is composed of two sequential steps, AdoMet formation and the subsequent tripolyphosphate hydrolysis which occurs prior to release of AdoMet from the enzyme. The sequence is that of S-adenosylmethionine synthase from Thermosipho melanesiensis (strain DSM 12029 / CIP 104789 / BI429).